Here is a 630-residue protein sequence, read N- to C-terminus: Phosphomethylpyrimidine synthase (630 aa).

Substrate contacts are provided by residues Asn-227, Met-256, Tyr-285, His-321, 341–343, 382–385, and Glu-421; these read SRG and DGLR. Zn(2+) is bound at residue His-425. Tyr-448 lines the substrate pocket. His-489 contacts Zn(2+). [4Fe-4S] cluster-binding residues include Cys-569, Cys-572, and Cys-577.

Belongs to the ThiC family. Homodimer. It depends on [4Fe-4S] cluster as a cofactor.

It catalyses the reaction 5-amino-1-(5-phospho-beta-D-ribosyl)imidazole + S-adenosyl-L-methionine = 4-amino-2-methyl-5-(phosphooxymethyl)pyrimidine + CO + 5'-deoxyadenosine + formate + L-methionine + 3 H(+). It participates in cofactor biosynthesis; thiamine diphosphate biosynthesis. Its function is as follows. Catalyzes the synthesis of the hydroxymethylpyrimidine phosphate (HMP-P) moiety of thiamine from aminoimidazole ribotide (AIR) in a radical S-adenosyl-L-methionine (SAM)-dependent reaction. This is Phosphomethylpyrimidine synthase from Hydrogenovibrio crunogenus (strain DSM 25203 / XCL-2) (Thiomicrospira crunogena).